The chain runs to 388 residues: 1D-myo-inositol 2-acetamido-2-deoxy-alpha-D-glucopyranoside deacetylase (388 aa).

Zn(2+)-binding residues include H6, D9, and H144. Residues 369 to 388 are disordered; sequence LDQADEGAAHDTSEQSGQRR.

It belongs to the MshB deacetylase family. Zn(2+) is required as a cofactor.

The enzyme catalyses 1D-myo-inositol 2-acetamido-2-deoxy-alpha-D-glucopyranoside + H2O = 1D-myo-inositol 2-amino-2-deoxy-alpha-D-glucopyranoside + acetate. In terms of biological role, catalyzes the deacetylation of 1D-myo-inositol 2-acetamido-2-deoxy-alpha-D-glucopyranoside (GlcNAc-Ins) in the mycothiol biosynthesis pathway. The polypeptide is 1D-myo-inositol 2-acetamido-2-deoxy-alpha-D-glucopyranoside deacetylase (Corynebacterium kroppenstedtii (strain DSM 44385 / JCM 11950 / CIP 105744 / CCUG 35717)).